Here is a 326-residue protein sequence, read N- to C-terminus: Adenosine receptor A1 (326 aa).

Topologically, residues 1 to 10 (MPPSISAFQA) are extracellular. Residues 11–33 (AYIGIEVLIALVSVPGNVLVIWA) traverse the membrane as a helical segment. Over 34-46 (VKVNQALRDATFC) the chain is Cytoplasmic. Residues 47-69 (FIVSLAVADVAVGALVIPLAILI) traverse the membrane as a helical segment. Over 70–80 (NIGPQTYFHTC) the chain is Extracellular. Cysteine 80 and cysteine 169 are joined by a disulfide. A helical membrane pass occupies residues 81-102 (LMVACPVLILTQSSILALLAIA). Residues 103–123 (VDRYLRVKIPLRYKMVVTPRR) are Cytoplasmic-facing. Residues 124–146 (AAVAIAGCWILSFVVGLTPMFGW) form a helical membrane-spanning segment. The Extracellular segment spans residues 147–176 (NNLSAVERAWAANGSMGEPVIKCEFEKVIS). An N-linked (GlcNAc...) asparagine glycan is attached at asparagine 159. Residues 177–201 (MEYMVYFNFFVWVLPPLLLMVLIYL) traverse the membrane as a helical segment. Over 202–235 (EVFYLIRKQLNKKVSASSGDPQKYYGKELKIAKS) the chain is Cytoplasmic. A helical transmembrane segment spans residues 236–259 (LALILFLFALSWLPLHILNCITLF). Over 260-267 (CPSCHKPS) the chain is Extracellular. A helical membrane pass occupies residues 268 to 292 (ILTYIAIFLTHGNSAMNPIVYAFRI). Residues 293–326 (QKFRVTFLKIWNDHFRCQPAPPIDEDLPEERPDD) lie on the Cytoplasmic side of the membrane. Cysteine 309 carries S-palmitoyl cysteine lipidation.

It belongs to the G-protein coupled receptor 1 family.

It is found in the cell membrane. Its function is as follows. Receptor for adenosine. The activity of this receptor is mediated by G proteins which inhibit adenylyl cyclase. The protein is Adenosine receptor A1 (ADORA1) of Homo sapiens (Human).